A 166-amino-acid chain; its full sequence is UPF0561 protein C2orf68 homolog (166 aa).

The segment covering 32 to 49 has biased composition (basic and acidic residues); that stretch reads NQLDRDDYDKKVKQAAKE. The tract at residues 32–107 is disordered; sequence NQLDRDDYDK…SELEPPGRQL (76 aa). A compositionally biased stretch (low complexity) spans 91–101; that stretch reads ESSSSGSSELE.

The protein belongs to the UPF0561 family.

The sequence is that of UPF0561 protein C2orf68 homolog from Mus musculus (Mouse).